The primary structure comprises 79 residues: Ixosin (79 aa).

The propeptide at 1–56 (MSAHKVQIGLSSGQFRVALQVPSVRLKGLGSFHTGSIVLPSQGSLREDQISLHNQD) is removed in mature form.

In terms of biological role, has antifungal activity against C.albicans. Has antibacterial activity against the Gram-positive bacterium S.aureus and the Gram-negative bacterium E.coli. Lacks hemolytic activity against rabbit erythrocytes. The protein is Ixosin of Ixodes sinensis (Hard tick).